A 412-amino-acid chain; its full sequence is Multifunctional CCA protein (412 aa).

ATP-binding residues include Gly8 and Arg11. The CTP site is built by Gly8 and Arg11. Residues Asp21 and Asp23 each contribute to the Mg(2+) site. Positions 91, 137, and 140 each coordinate ATP. 3 residues coordinate CTP: Arg91, Arg137, and Arg140. The HD domain occupies 225–326; sequence TGIHVMMVID…ADMLQATDAY (102 aa).

It belongs to the tRNA nucleotidyltransferase/poly(A) polymerase family. Bacterial CCA-adding enzyme type 1 subfamily. In terms of assembly, monomer. Can also form homodimers and oligomers. Requires Mg(2+) as cofactor. Ni(2+) is required as a cofactor.

The catalysed reaction is a tRNA precursor + 2 CTP + ATP = a tRNA with a 3' CCA end + 3 diphosphate. It carries out the reaction a tRNA with a 3' CCA end + 2 CTP + ATP = a tRNA with a 3' CCACCA end + 3 diphosphate. Functionally, catalyzes the addition and repair of the essential 3'-terminal CCA sequence in tRNAs without using a nucleic acid template. Adds these three nucleotides in the order of C, C, and A to the tRNA nucleotide-73, using CTP and ATP as substrates and producing inorganic pyrophosphate. tRNA 3'-terminal CCA addition is required both for tRNA processing and repair. Also involved in tRNA surveillance by mediating tandem CCA addition to generate a CCACCA at the 3' terminus of unstable tRNAs. While stable tRNAs receive only 3'-terminal CCA, unstable tRNAs are marked with CCACCA and rapidly degraded. This is Multifunctional CCA protein from Nitrosomonas europaea (strain ATCC 19718 / CIP 103999 / KCTC 2705 / NBRC 14298).